The following is a 462-amino-acid chain: Acetate--CoA ligase [ADP-forming] I subunit alpha (462 aa).

It belongs to the acetate CoA ligase alpha subunit family. In terms of assembly, heterotetramer of two alpha and two beta subunits.

The protein localises to the cytoplasm. The enzyme catalyses acetate + ATP + CoA = acetyl-CoA + ADP + phosphate. Its activity is regulated as follows. Activity is dependent on magnesium. Its function is as follows. Catalyzes the reversible formation of acetate and ATP from acetyl-CoA by using ADP and phosphate. Can use other substrates such as isobutyryl-CoA, propionyl-CoA and butyryl-CoA, but not indoleacetyl-CoA, phenylacetyl-CoA or succinyl-CoA. Seems to be involved primarily in the conversion of acetyl-CoA to acetate. Participates in the degradation of branched-chain amino acids via branched-chain-acyl-CoA esters. This Pyrococcus furiosus (strain ATCC 43587 / DSM 3638 / JCM 8422 / Vc1) protein is Acetate--CoA ligase [ADP-forming] I subunit alpha.